We begin with the raw amino-acid sequence, 278 residues long: Large ribosomal subunit protein uL2c (278 aa).

Disordered stretches follow at residues 32–56 (SLTSGKMSKKGRNNQGIITSRHRGG) and 203–256 (QSIG…PTIG). Residues 209–220 (GSKRWQGKRPKV) are compositionally biased toward basic residues.

Belongs to the universal ribosomal protein uL2 family. Part of the 50S ribosomal subunit.

The protein localises to the plastid. Its subcellular location is the chloroplast. The chain is Large ribosomal subunit protein uL2c (rpl2) from Chara vulgaris (Common stonewort).